Reading from the N-terminus, the 100-residue chain is Aspartyl/glutamyl-tRNA(Asn/Gln) amidotransferase subunit C (100 aa).

This sequence belongs to the GatC family. Heterotrimer of A, B and C subunits.

It catalyses the reaction L-glutamyl-tRNA(Gln) + L-glutamine + ATP + H2O = L-glutaminyl-tRNA(Gln) + L-glutamate + ADP + phosphate + H(+). The enzyme catalyses L-aspartyl-tRNA(Asn) + L-glutamine + ATP + H2O = L-asparaginyl-tRNA(Asn) + L-glutamate + ADP + phosphate + 2 H(+). Allows the formation of correctly charged Asn-tRNA(Asn) or Gln-tRNA(Gln) through the transamidation of misacylated Asp-tRNA(Asn) or Glu-tRNA(Gln) in organisms which lack either or both of asparaginyl-tRNA or glutaminyl-tRNA synthetases. The reaction takes place in the presence of glutamine and ATP through an activated phospho-Asp-tRNA(Asn) or phospho-Glu-tRNA(Gln). The polypeptide is Aspartyl/glutamyl-tRNA(Asn/Gln) amidotransferase subunit C (Staphylococcus saprophyticus subsp. saprophyticus (strain ATCC 15305 / DSM 20229 / NCIMB 8711 / NCTC 7292 / S-41)).